Consider the following 174-residue polypeptide: RNA polymerase sigma factor CarQ (174 aa).

A Polymerase core binding motif is present at residues 39–52; sequence DLLQATFLSVIRSR. Residues 86–106 form a disordered region; the sequence is YASREDTATPASAAPDDSDPS. The segment at residues 136-155 is a DNA-binding region (H-T-H motif); sequence FEEIGALRGISPGAARLRAH.

Belongs to the sigma-70 factor family. ECF subfamily.

Sigma factors are initiation factors that promote the attachment of RNA polymerase to specific initiation sites and are then released. This sigma factor regulates genes for the light induced biosynthesis of carotenoids. In Myxococcus xanthus, this protein is RNA polymerase sigma factor CarQ (carQ).